Here is a 562-residue protein sequence, read N- to C-terminus: Urease subunit alpha (562 aa).

The region spanning Gly131 to Phe562 is the Urease domain. Ni(2+)-binding residues include His136, His138, and Lys219. Lys219 is modified (N6-carboxylysine). Substrate is bound at residue His221. The Ni(2+) site is built by His248 and His274. His322 acts as the Proton donor in catalysis. Asp362 contacts Ni(2+).

Belongs to the metallo-dependent hydrolases superfamily. Urease alpha subunit family. Heterotrimer of UreA (gamma), UreB (beta) and UreC (alpha) subunits. Three heterotrimers associate to form the active enzyme. It depends on Ni cation as a cofactor. Carboxylation allows a single lysine to coordinate two nickel ions.

It is found in the cytoplasm. It catalyses the reaction urea + 2 H2O + H(+) = hydrogencarbonate + 2 NH4(+). It participates in nitrogen metabolism; urea degradation; CO(2) and NH(3) from urea (urease route): step 1/1. This chain is Urease subunit alpha, found in Paracoccus denitrificans (strain Pd 1222).